The following is a 73-amino-acid chain: Large ribosomal subunit protein uL29 (73 aa).

Belongs to the universal ribosomal protein uL29 family.

This Synechocystis sp. (strain ATCC 27184 / PCC 6803 / Kazusa) protein is Large ribosomal subunit protein uL29 (rpmC).